A 1742-amino-acid polypeptide reads, in one-letter code: Kinase non-catalytic C-lobe domain-containing protein 1 (1742 aa).

Residues Val37–Gly217 enclose the KIND 1 domain. 2 disordered regions span residues Trp215–Ala288 and Phe365–Ser455. The residue at position 267 (Ser267) is a Phosphoserine. The span at Leu403–Ser412 shows a compositional bias: polar residues. Residues Asp426–Arg445 show a composition bias toward basic and acidic residues. Residues Leu456–Glu620 form the KIND 2 domain. Disordered regions lie at residues Asp703–Thr727, Ser744–Ala876, Gly948–Ile1006, and Val1028–Phe1076. Positions Ser711–Thr727 are enriched in basic and acidic residues. Residues Gly755 to Thr771 are compositionally biased toward low complexity. Residues Val782–Thr791 show a composition bias toward polar residues. Residues Ser847–Leu861 show a composition bias toward basic and acidic residues. Low complexity predominate over residues Pro949–Glu965. Ser951 bears the Phosphoserine mark. Positions Gly1043–Ser1053 are enriched in polar residues. Residues His1112 to Ser1177 adopt a coiled-coil conformation. Positions Lys1239 to Arg1367 constitute an N-terminal Ras-GEF domain. A Ras-GEF domain is found at Ser1461–Ala1712.

In terms of assembly, interacts (via KIND2) with MAP2; the interaction enhances MAP2 phosphorylation and localizes KNDC1 to dendrites. As to expression, highly expressed in the brain and at low levels in the ovary. In the brain it is most prominently expressed in the cerebellum where it is restricted to the granular Purkinje cell layer.

It localises to the cell projection. The protein localises to the dendrite. The protein resides in the perikaryon. Functionally, RAS-Guanine nucleotide exchange factor (GEF) that controls the negative regulation of neuronal dendrite growth by mediating a signaling pathway linking RAS and MAP2. May be involved in cellular senescence. In Mus musculus (Mouse), this protein is Kinase non-catalytic C-lobe domain-containing protein 1.